Reading from the N-terminus, the 89-residue chain is Small ribosomal subunit protein uS15 (89 aa).

The protein belongs to the universal ribosomal protein uS15 family. Part of the 30S ribosomal subunit. Forms a bridge to the 50S subunit in the 70S ribosome, contacting the 23S rRNA.

Functionally, one of the primary rRNA binding proteins, it binds directly to 16S rRNA where it helps nucleate assembly of the platform of the 30S subunit by binding and bridging several RNA helices of the 16S rRNA. Forms an intersubunit bridge (bridge B4) with the 23S rRNA of the 50S subunit in the ribosome. This Paenarthrobacter aurescens (strain TC1) protein is Small ribosomal subunit protein uS15.